A 66-amino-acid polypeptide reads, in one-letter code: Movement protein TGBp3 (66 aa).

Residues M1 to D2 lie on the Lumenal side of the membrane. Residues F3–I23 traverse the membrane as a helical segment. At N24–I66 the chain is on the cytoplasmic side.

Belongs to the Tymovirales TGBp3 protein family.

The protein resides in the host endoplasmic reticulum membrane. In terms of biological role, plays a role in viral cell-to-cell propagation, by facilitating genome transport to neighboring plant cells through plasmosdesmata. May induce the formation of granular vesicles derived from the Endoplasmic reticulum, which align on actin filaments. The polypeptide is Movement protein TGBp3 (Trifolium (WCMV)).